Reading from the N-terminus, the 205-residue chain is Homeobox protein goosecoid-2 (205 aa).

Disordered stretches follow at residues 33 to 58 (SLPA…EPGA) and 185 to 205 (KRAS…KGSC). Residues 126–185 (TRRHRTIFSEEQLQALEALFVQNQYPDVSTRERLAGRIRLREERVEVWFKNRRAKWRHQK) constitute a DNA-binding region (homeobox).

It belongs to the paired homeobox family. Bicoid subfamily. In terms of tissue distribution, detected in adult testis and pituitary, and in 9-10 week fetal tissue (thorax). Probably expressed in other tissues at low levels.

The protein localises to the nucleus. In terms of biological role, may have a role in development. May regulate its own transcription. May bind the bicoid consensus sequence TAATCC. The polypeptide is Homeobox protein goosecoid-2 (GSC2) (Homo sapiens (Human)).